The chain runs to 122 residues: Glucagon-2 (122 aa).

The signal sequence occupies residues 1–21 (MTSLHSLAGLLLLMIIQSSWQ). Propeptides lie at residues 83-86 (NGLF) and glutamate 122.

It belongs to the glucagon family.

Its subcellular location is the secreted. Promotes hydrolysis of glycogen and lipids, and raises the blood sugar level. The protein is Glucagon-2 (gcg2) of Lophius americanus (American angler).